We begin with the raw amino-acid sequence, 573 residues long: Ribonuclease J (573 aa).

A disordered region spans residues 1–29; it reads MENQERKPRRRRRRRPQEGSQGGPQDHVE. Positions 93, 95, 97, 98, 168, and 190 each coordinate Zn(2+). Residues 259–261 and 390–394 contribute to the substrate site; these read ASH and HASGH. A Zn(2+)-binding site is contributed by H416.

This sequence belongs to the metallo-beta-lactamase superfamily. RNA-metabolizing metallo-beta-lactamase-like family. Bacterial RNase J subfamily. In terms of assembly, homodimer. May be a subunit of the RNA degradosome. Zn(2+) is required as a cofactor.

The protein resides in the cytoplasm. An RNase that has endonuclease and possibly 5'-3' exonuclease activity. Probably involved in maturation of rRNA and in some organisms also mRNA maturation and/or decay. The protein is Ribonuclease J of Thermus thermophilus (strain ATCC BAA-163 / DSM 7039 / HB27).